We begin with the raw amino-acid sequence, 617 residues long: Protein fem-1 homolog C (617 aa).

Methionine 1 carries the post-translational modification N-acetylmethionine. 7 ANK repeats span residues 2–31, 40–70, 82–111, 115–144, 148–177, 181–210, and 213–242; these read DLKT…KAEV, NGAT…SIEV, EGAP…SVNN, TNST…DLEV, HGHT…DVNR, KGNT…KMEK, and YGMT…TSKT. TPR repeat units lie at residues 245–279 and 338–371; these read INAL…RYSD and SYYI…QQSN. ANK repeat units lie at residues 481 to 523 and 527 to 556; these read NNFS…DVNV and DDNS…HFDA.

Belongs to the fem-1 family. In terms of assembly, component of a Cul2-RING (CRL2) E3 ubiquitin-protein ligase complex, also named ECS (Elongin BC-CUL2/5-SOCS-box protein) complex, composed of CUL2, Elongin BC (ELOB and ELOC), RBX1 and substrate-specific adapter FEM1C. In terms of tissue distribution, widely expressed. Expressed at higher level in testis.

It participates in protein modification; protein ubiquitination. Substrate-recognition component of a Cul2-RING (CRL2) E3 ubiquitin-protein ligase complex of the DesCEND (destruction via C-end degrons) pathway, which recognizes a C-degron located at the extreme C terminus of target proteins, leading to their ubiquitination and degradation. The C-degron recognized by the DesCEND pathway is usually a motif of less than ten residues and can be present in full-length proteins, truncated proteins or proteolytically cleaved forms. The CRL2(FEM1C) complex specifically recognizes proteins with an arginine at the C-terminus: recognizes and binds proteins ending with -Lys/Arg-Xaa-Arg and -Lys/Arg-Xaa-Xaa-Arg C-degrons, such as SIL1 or OR51B2, leading to their ubiquitination and degradation. The CRL2(FEM1C) complex mediates ubiquitination and degradation of truncated MSRB1/SEPX1 selenoproteins produced by failed UGA/Sec decoding. Promotes ubiquitination and degradation of SLBP. This Mus musculus (Mouse) protein is Protein fem-1 homolog C.